We begin with the raw amino-acid sequence, 204 residues long: LexA repressor (204 aa).

The segment at residues 31-51 (VREIGQAVGLKSSSTVHTHLV) is a DNA-binding region (H-T-H motif). Catalysis depends on for autocatalytic cleavage activity residues serine 128 and lysine 165.

Belongs to the peptidase S24 family. In terms of assembly, homodimer.

The catalysed reaction is Hydrolysis of Ala-|-Gly bond in repressor LexA.. In terms of biological role, represses a number of genes involved in the response to DNA damage (SOS response), including recA and lexA. In the presence of single-stranded DNA, RecA interacts with LexA causing an autocatalytic cleavage which disrupts the DNA-binding part of LexA, leading to derepression of the SOS regulon and eventually DNA repair. The chain is LexA repressor from Syntrophomonas wolfei subsp. wolfei (strain DSM 2245B / Goettingen).